The sequence spans 231 residues: D-allulose-6-phosphate 3-epimerase (231 aa).

Ser-6 serves as a coordination point for substrate. The a divalent metal cation site is built by His-30, Asp-32, and His-63. Residue Asp-32 is the Proton acceptor of the active site. Substrate-binding positions include His-63, 140 to 143, 173 to 175, and 195 to 197; these read GFAG, DGS, and GTS. An a divalent metal cation-binding site is contributed by Asp-173. Asp-173 acts as the Proton donor in catalysis.

The protein belongs to the ribulose-phosphate 3-epimerase family. AlsE subfamily. Homohexamer. Trimer of dimers. It depends on Co(2+) as a cofactor. Requires Mn(2+) as cofactor. Zn(2+) is required as a cofactor.

It catalyses the reaction D-allulose 6-phosphate = keto-D-fructose 6-phosphate. It participates in carbohydrate degradation; D-allose degradation. In terms of biological role, catalyzes the reversible epimerization of D-allulose 6-phosphate to D-fructose 6-phosphate. Can also catalyze with lower efficiency the reversible epimerization of D-ribulose 5-phosphate to D-xylulose 5-phosphate. The protein is D-allulose-6-phosphate 3-epimerase of Escherichia coli (strain K12).